A 188-amino-acid chain; its full sequence is Putative manganese efflux pump MntP (188 aa).

The next 6 membrane-spanning stretches (helical) occupy residues 3–23 (LYAL…VALA), 35–55 (IAAT…AGWV), 63–83 (FISE…GLKM), 104–126 (WMTV…GLAF), 140–160 (MAAT…GVLF), and 167–187 (AGGL…LGLI).

The protein belongs to the MntP (TC 9.B.29) family.

It localises to the cell inner membrane. Functionally, probably functions as a manganese efflux pump. The protein is Putative manganese efflux pump MntP of Neisseria gonorrhoeae (strain ATCC 700825 / FA 1090).